Consider the following 353-residue polypeptide: MRIVEEDEKNGVIELVPETLDDLWHLSHIIEEGDLLSARTTRRIQDTSGEKIRSDRGVKKTFYLGIRVETVSFHIYTGRLRATGVIERGPEDLVPMGSHHTLEVKLNTPLRIQKEHWSRWTLKRLRMAVRASKNLKAIILVMEDDVAELGLIRQYGVEYRGPITGHIPGKRIQQRDRGKLRREFYESIVESLQKYGDLETIIIAGPGFYKSDFYDYLMERYPEIAKKAVLENTGTGGRAGISEVLRKGTVERVSSEKRIASEIRNVNEFLEKLARDPDSVVYGKVEVMDAINMGAVEKLLVLDRVVSREDIEGYLDMVESMGGSVVLISSEHEGGKQLESLGGLAGILRFKIQ.

Belongs to the eukaryotic release factor 1 family. Pelota subfamily. As to quaternary structure, monomer. A divalent metal cation serves as cofactor.

Its subcellular location is the cytoplasm. In terms of biological role, may function in recognizing stalled ribosomes, interact with stem-loop structures in stalled mRNA molecules, and effect endonucleolytic cleavage of the mRNA. May play a role in the release non-functional ribosomes and degradation of damaged mRNAs. Has endoribonuclease activity. The chain is Protein pelota homolog from Methanothermobacter thermautotrophicus (strain ATCC 29096 / DSM 1053 / JCM 10044 / NBRC 100330 / Delta H) (Methanobacterium thermoautotrophicum).